We begin with the raw amino-acid sequence, 390 residues long: Elongation factor Tu 2 (390 aa).

The tr-type G domain occupies 10-201 (KPHVNVGTIG…LDEYVAVPPR (192 aa)). Residues 19 to 26 (GHVDHGKT) form a G1 region. 19-26 (GHVDHGKT) lines the GTP pocket. T26 contributes to the Mg(2+) binding site. Residues 55–59 (GITIA) are G2. Positions 76-79 (DCPG) are G3. GTP-binding positions include 76-80 (DCPGH) and 131-134 (NKAD). The tract at residues 131–134 (NKAD) is G4. A G5 region spans residues 168–170 (SAL).

It belongs to the TRAFAC class translation factor GTPase superfamily. Classic translation factor GTPase family. EF-Tu/EF-1A subfamily. As to quaternary structure, monomer.

Its subcellular location is the cytoplasm. It catalyses the reaction GTP + H2O = GDP + phosphate + H(+). In terms of biological role, GTP hydrolase that promotes the GTP-dependent binding of aminoacyl-tRNA to the A-site of ribosomes during protein biosynthesis. This Wolbachia pipientis wMel protein is Elongation factor Tu 2.